Reading from the N-terminus, the 889-residue chain is Protein translocase subunit SecA (889 aa).

Residues Q87, 105–109 (GEGKT), and D494 contribute to the ATP site. The tract at residues 823–889 (ESLRPEEADL…RMDKDTKGKR (67 aa)) is disordered. Residues 867-889 (PRDDRPMNREERRRMDKDTKGKR) show a composition bias toward basic and acidic residues.

The protein belongs to the SecA family. As to quaternary structure, monomer and homodimer. Part of the essential Sec protein translocation apparatus which comprises SecA, SecYEG and auxiliary proteins SecDF-YajC and YidC.

The protein localises to the cell inner membrane. Its subcellular location is the cytoplasm. The enzyme catalyses ATP + H2O + cellular proteinSide 1 = ADP + phosphate + cellular proteinSide 2.. Part of the Sec protein translocase complex. Interacts with the SecYEG preprotein conducting channel. Has a central role in coupling the hydrolysis of ATP to the transfer of proteins into and across the cell membrane, serving as an ATP-driven molecular motor driving the stepwise translocation of polypeptide chains across the membrane. The polypeptide is Protein translocase subunit SecA (Bdellovibrio bacteriovorus (strain ATCC 15356 / DSM 50701 / NCIMB 9529 / HD100)).